The primary structure comprises 434 residues: Histidinol dehydrogenase (434 aa).

NAD(+) is bound by residues Tyr130, Gln191, and Asn214. Substrate contacts are provided by Ser237, Gln259, and His262. Gln259 and His262 together coordinate Zn(2+). Active-site proton acceptor residues include Glu327 and His328. Substrate-binding residues include His328, Asp361, Glu415, and His420. A Zn(2+)-binding site is contributed by Asp361. Residue His420 coordinates Zn(2+).

This sequence belongs to the histidinol dehydrogenase family. It depends on Zn(2+) as a cofactor.

The enzyme catalyses L-histidinol + 2 NAD(+) + H2O = L-histidine + 2 NADH + 3 H(+). Its pathway is amino-acid biosynthesis; L-histidine biosynthesis; L-histidine from 5-phospho-alpha-D-ribose 1-diphosphate: step 9/9. Catalyzes the sequential NAD-dependent oxidations of L-histidinol to L-histidinaldehyde and then to L-histidine. The chain is Histidinol dehydrogenase from Rhizobium meliloti (strain 1021) (Ensifer meliloti).